Consider the following 217-residue polypeptide: MKFFVDTADVKDIRELNDLGLLDGVTTNPSLILKAGRDIVEVTKEICSIVEGPVSAEVTATEYSAMMKEAAALSKIADNICIKLPLTLDGLKACKALTSDGHQTNVTLCFSANQALLAAKAGATFVSPFIGRLDDIAVDGMDLIREIRQIFDNYGYETEILAASVRTVNHVKEAALIGADVVTAPPATLKALVKHPLTDKGLEMFLADWAKTGQKIA.

Catalysis depends on K83, which acts as the Schiff-base intermediate with substrate.

The protein belongs to the transaldolase family. Type 3B subfamily.

It localises to the cytoplasm. The enzyme catalyses D-sedoheptulose 7-phosphate + D-glyceraldehyde 3-phosphate = D-erythrose 4-phosphate + beta-D-fructose 6-phosphate. Its pathway is carbohydrate degradation; pentose phosphate pathway; D-glyceraldehyde 3-phosphate and beta-D-fructose 6-phosphate from D-ribose 5-phosphate and D-xylulose 5-phosphate (non-oxidative stage): step 2/3. Its function is as follows. Transaldolase is important for the balance of metabolites in the pentose-phosphate pathway. The chain is Probable transaldolase from Rhizobium meliloti (strain 1021) (Ensifer meliloti).